The primary structure comprises 628 residues: Probable potassium transport system protein Kup (628 aa).

A run of 12 helical transmembrane segments spans residues 15–35 (FAAE…SPLY), 49–69 (FLGG…ILSV), 106–126 (WYLL…GVLT), 141–161 (ISPE…LAVF), 174–194 (FFGP…VYGI), 210–230 (IMLM…CFLA), 254–274 (LFVA…ILLV), 295–315 (LLFL…TGVF), 343–363 (IYVG…VLGF), 369–389 (LASA…ILFI), 398–418 (WPAP…FAFA), and 425–445 (IHDG…VMVS).

Belongs to the HAK/KUP transporter (TC 2.A.72) family.

The protein localises to the cell inner membrane. The enzyme catalyses K(+)(in) + H(+)(in) = K(+)(out) + H(+)(out). Transport of potassium into the cell. Likely operates as a K(+):H(+) symporter. In Xanthobacter autotrophicus (strain ATCC BAA-1158 / Py2), this protein is Probable potassium transport system protein Kup.